The primary structure comprises 419 residues: Phosphoglycerate kinase (419 aa).

Substrate is bound by residues 42–44 (DLN), arginine 58, 81–84 (HLGR), arginine 135, and arginine 168. ATP is bound by residues lysine 219, glutamate 341, and 367 to 370 (GGDT).

It belongs to the phosphoglycerate kinase family. As to quaternary structure, monomer.

It localises to the cytoplasm. The enzyme catalyses (2R)-3-phosphoglycerate + ATP = (2R)-3-phospho-glyceroyl phosphate + ADP. Its pathway is carbohydrate degradation; glycolysis; pyruvate from D-glyceraldehyde 3-phosphate: step 2/5. In Ralstonia nicotianae (strain ATCC BAA-1114 / GMI1000) (Ralstonia solanacearum), this protein is Phosphoglycerate kinase.